Consider the following 417-residue polypeptide: L-rhamnose isomerase (417 aa).

Mn(2+) is bound by residues H260, D292, and D294.

This sequence belongs to the rhamnose isomerase family. Mn(2+) is required as a cofactor.

The protein localises to the cytoplasm. It catalyses the reaction L-rhamnopyranose = L-rhamnulose. The protein operates within carbohydrate degradation; L-rhamnose degradation; glycerone phosphate from L-rhamnose: step 1/3. Functionally, catalyzes the interconversion of L-rhamnose and L-rhamnulose. The chain is L-rhamnose isomerase from Mannheimia succiniciproducens (strain KCTC 0769BP / MBEL55E).